The sequence spans 515 residues: Maturase K (515 aa).

Belongs to the intron maturase 2 family. MatK subfamily.

The protein resides in the plastid. Its subcellular location is the chloroplast. In terms of biological role, usually encoded in the trnK tRNA gene intron. Probably assists in splicing its own and other chloroplast group II introns. This Trillium pusillum (Dwarf wakerobin) protein is Maturase K.